The primary structure comprises 653 residues: Fructose-1,6-bisphosphatase class 3 (653 aa).

It belongs to the FBPase class 3 family. Mn(2+) is required as a cofactor.

It carries out the reaction beta-D-fructose 1,6-bisphosphate + H2O = beta-D-fructose 6-phosphate + phosphate. Its pathway is carbohydrate biosynthesis; gluconeogenesis. This Listeria monocytogenes serotype 4b (strain CLIP80459) protein is Fructose-1,6-bisphosphatase class 3.